Consider the following 132-residue polypeptide: CLAVATA3/ESR (CLE)-related protein ESR2 (132 aa).

A signal peptide spans Met1–Ala26. A disordered region spans residues Asn68 to Tyr132. Residues Pro82 and Pro85 each carry the hydroxyproline modification. Pro85 carries an O-linked (Ara...) hydroxyproline glycan. Over residues Ile123–Tyr132 the composition is skewed to pro residues.

It belongs to the CLV3/ESR signal peptide family. In terms of processing, the O-glycosylation (arabinosylation) of the hydroxyproline Pro-85 enhances binding affinity of the ESR2p peptide for its receptor. As to expression, seed endosperm.

Its subcellular location is the secreted. The protein resides in the extracellular space. Its function is as follows. Extracellular signal peptide that regulates cell fate. In Zea mays (Maize), this protein is CLAVATA3/ESR (CLE)-related protein ESR2.